The following is a 782-amino-acid chain: General transcription and DNA repair factor IIH helicase/translocase subunit XPB (782 aa).

Positions 1–11 are enriched in basic and acidic residues; that stretch reads MGKRDRVDRDK. Residues 1–52 are disordered; it reads MGKRDRVDRDKKKSKKRQYEEEEEDEDDAPGNESQEAVPSAAGKQVDESSTK. The Nuclear localization signal signature appears at 6-18; the sequence is RVDRDKKKSKKRQ. Residues 20-30 are compositionally biased toward acidic residues; that stretch reads EEEEEDEDDAP. Ser-34 is modified (phosphoserine). Residues 328–489 form the Helicase ATP-binding domain; it reads FGNGRARSGV…LNFLIGPKLY (162 aa). Residue 341–348 coordinates ATP; it reads PCGAGKSL. The short motif at 442–445 is the DEVH box element; that stretch reads EVHT. Residues 543–703 form the Helicase C-terminal domain; the sequence is ACQFLIKFHE…AGMEEEELAF (161 aa). Position 686 is a phosphoserine (Ser-686). Residue Ser-751 is modified to Phosphoserine; by CK2.

It belongs to the helicase family. RAD25/XPB subfamily. As to quaternary structure, component of the 7-subunit TFIIH core complex composed of XPB/ERCC3, XPD/ERCC2, GTF2H1, GTF2H2, GTF2H3, GTF2H4 and GTF2H5, which is active in NER. The core complex associates with the 3-subunit CDK-activating kinase (CAK) module composed of CCNH/cyclin H, CDK7 and MNAT1 to form the 10-subunit holoenzyme (holo-TFIIH) active in transcription. Interacts with PUF60. Interacts with ATF7IP. Interacts with KAT2A; leading to KAT2A recruitment to promoters and acetylation of histones. Part of TBP-based Pol II pre-initiation complex (PIC), in which Pol II core assembles with general transcription factors and other specific initiation factors including GTF2E1, GTF2E2, GTF2F1, GTF2F2, TCEA1, ERCC2, ERCC3, GTF2H2, GTF2H3, GTF2H4, GTF2H5, GTF2A1, GTF2A2, GTF2B and TBP; this large multi-subunit PIC complex mediates DNA unwinding and targets Pol II core to the transcription start site where the first phosphodiester bond forms. Phosphorylation on Ser-751 by CK2 controls the 5'-excision activity of ERCC1-XPF endonuclease; phosphorylated protein inhibits the excision activity and thus NER. Dephosphorylation reactivates the 5'-excision step. Phosphorylation has no effect on transcription or the 3'-5' helicase activity.

Its subcellular location is the nucleus. It catalyses the reaction Couples ATP hydrolysis with the unwinding of duplex DNA by translocating in the 3'-5' direction.. It carries out the reaction ATP + H2O = ADP + phosphate + H(+). Its activity is regulated as follows. Phosphorylation on Ser-751 by CK2 controls the 5'-excision activity of ERCC1-XPF endonuclease; phosphorylated protein inhibits the excision activity and thus NER. ATPase activity is stimulated by TFIIH subunit p52 (GTF2H4). DNA translocase activity by this subunit in TFIIH is stimulated by XPA, ERCC5/XPG and XFP plus ERCC1. ATP-dependent 3'-5' DNA helicase/translocase; binds dsDNA rather than ssDNA, unzipping it in a translocase rather than classical helicase activity. Component of the general transcription and DNA repair factor IIH (TFIIH) core complex. When complexed to CDK-activating kinase (CAK), involved in RNA transcription by RNA polymerase II. The ATPase activity of XPB/ERCC3, but not its helicase activity, is required for DNA opening; it may wrap around the damaged DNA wedging it open, causing localized melting and twisting that allows XPD/ERCC2 helicase to anchor. The ATP-dependent helicase activity of XPB/ERCC3 may be required for promoter escape. Also involved in transcription-coupled nucleotide excision repair (NER) of damaged DNA. In NER, TFIIH acts by opening DNA around the lesion to allow the excision of the damaged oligonucleotide and its replacement by a new DNA fragment. The structure of the TFIIH transcription complex differs from the NER-TFIIH complex; large movements by XPD/ERCC2 and XPB/ERCC3 are stabilized by XPA. This chain is General transcription and DNA repair factor IIH helicase/translocase subunit XPB (Ercc3), found in Rattus norvegicus (Rat).